The following is a 496-amino-acid chain: Lysine--tRNA ligase (496 aa).

Positions 409 and 416 each coordinate Mg(2+).

It belongs to the class-II aminoacyl-tRNA synthetase family. In terms of assembly, homodimer. The cofactor is Mg(2+).

The protein localises to the cytoplasm. The catalysed reaction is tRNA(Lys) + L-lysine + ATP = L-lysyl-tRNA(Lys) + AMP + diphosphate. The polypeptide is Lysine--tRNA ligase (Streptococcus pneumoniae (strain Hungary19A-6)).